We begin with the raw amino-acid sequence, 132 residues long: Small ribosomal subunit protein bS6 (132 aa).

Residues 99 to 132 (ASPMVKAKDERRGDRREDFANETADDADAGDSEE) form a disordered region. Basic and acidic residues predominate over residues 104 to 117 (KAKDERRGDRREDF). A compositionally biased stretch (acidic residues) spans 121–132 (TADDADAGDSEE).

Belongs to the bacterial ribosomal protein bS6 family.

Binds together with bS18 to 16S ribosomal RNA. The sequence is that of Small ribosomal subunit protein bS6 from Serratia proteamaculans (strain 568).